The chain runs to 300 residues: 33 kDa chaperonin (300 aa).

Disulfide bonds link cysteine 235/cysteine 237 and cysteine 269/cysteine 272.

The protein belongs to the HSP33 family. Under oxidizing conditions two disulfide bonds are formed involving the reactive cysteines. Under reducing conditions zinc is bound to the reactive cysteines and the protein is inactive.

Its subcellular location is the cytoplasm. In terms of biological role, redox regulated molecular chaperone. Protects both thermally unfolding and oxidatively damaged proteins from irreversible aggregation. Plays an important role in the bacterial defense system toward oxidative stress. The protein is 33 kDa chaperonin of Pseudomonas fluorescens (strain SBW25).